We begin with the raw amino-acid sequence, 215 residues long: High frequency lysogenization protein HflD homolog (215 aa).

The protein belongs to the HflD family.

The protein resides in the cytoplasm. The protein localises to the cell inner membrane. The sequence is that of High frequency lysogenization protein HflD homolog from Haemophilus ducreyi (strain 35000HP / ATCC 700724).